The primary structure comprises 251 residues: uncharacterized protein (251 aa).

The RING-type zinc finger occupies 192–238 (CMMCVQRGDERVAITTPYTTDCGHTYCYACIMSRLKLVNNVSCPICK).

The protein resides in the cytoplasm. This is an uncharacterized protein from Schizosaccharomyces pombe (strain 972 / ATCC 24843) (Fission yeast).